Consider the following 1117-residue polypeptide: Cytospin-A (1117 aa).

Disordered regions lie at residues Met-1–Ser-176, Ser-293–Glu-323, and Ser-358–Glu-390. Low complexity-rich tracts occupy residues Thr-45 to Val-72 and Lys-99 to Ser-119. 2 stretches are compositionally biased toward basic and acidic residues: residues Ser-120–Arg-131 and Thr-158–Ser-171. The stretch at Lys-168–Gln-280 forms a coiled coil. Positions Ser-293 to Gln-303 are enriched in polar residues. Positions Ser-358–Ile-377 are enriched in low complexity. Ser-384, Ser-385, and Ser-389 each carry phosphoserine. 2 coiled-coil regions span residues Ala-394 to Leu-449 and Arg-487 to Val-807. The disordered stretch occupies residues Ser-852–Ala-878. Ser-868, Ser-881, and Ser-887 each carry phosphoserine. Residues Thr-920–Glu-997 are disordered. Over residues Arg-946–Ser-956 the composition is skewed to basic and acidic residues. Over residues Thr-971–Thr-990 the composition is skewed to low complexity. Residues Gly-1011–Glu-1116 form the Calponin-homology (CH) domain.

Belongs to the cytospin-A family. As to quaternary structure, may interact with both microtubules and actin cytoskeleton.

The protein localises to the cytoplasm. It is found in the cytoskeleton. It localises to the spindle. The protein resides in the cell junction. Its subcellular location is the gap junction. Functionally, involved in cytokinesis and spindle organization. May play a role in actin cytoskeleton organization and microtubule stabilization and hence required for proper cell adhesion and migration. This chain is Cytospin-A (SPECC1L), found in Canis lupus familiaris (Dog).